The chain runs to 59 residues: Large ribosomal subunit protein bL32 (59 aa).

Residues 1–28 (MAVQQNKKSPSKRGMHRAHDFLTDPPLA) form a disordered region.

This sequence belongs to the bacterial ribosomal protein bL32 family.

In Aromatoleum aromaticum (strain DSM 19018 / LMG 30748 / EbN1) (Azoarcus sp. (strain EbN1)), this protein is Large ribosomal subunit protein bL32.